A 92-amino-acid polypeptide reads, in one-letter code: C-C motif chemokine 4 (92 aa).

Positions 1 to 23 are cleaved as a signal peptide; that stretch reads MKLCVTVLSLLMLVAAFCSPALS. Disulfide bonds link cysteine 34-cysteine 58 and cysteine 35-cysteine 74.

It belongs to the intercrine beta (chemokine CC) family. Homodimer and heterodimer of MIP-1-alpha(4-69) and MIP-1-beta(3-69). In terms of processing, N-terminal processed form MIP-1-beta(3-69) is produced by proteolytic cleavage after secretion from peripheral blood lymphocytes.

Its subcellular location is the secreted. In terms of biological role, monokine with inflammatory and chemokinetic properties. Binds to CCR5. One of the major HIV-suppressive factors produced by CD8+ T-cells. Recombinant MIP-1-beta induces a dose-dependent inhibition of different strains of HIV-1, HIV-2, and simian immunodeficiency virus (SIV). The processed form MIP-1-beta(3-69) retains the abilities to induce down-modulation of surface expression of the chemokine receptor CCR5 and to inhibit the CCR5-mediated entry of HIV-1 in T-cells. MIP-1-beta(3-69) is also a ligand for CCR1 and CCR2 isoform B. This chain is C-C motif chemokine 4 (CCL4), found in Homo sapiens (Human).